Consider the following 483-residue polypeptide: Glutamyl-tRNA(Gln) amidotransferase subunit A (483 aa).

Residues Lys-77 and Ser-152 each act as charge relay system in the active site. The active-site Acyl-ester intermediate is Ser-176.

The protein belongs to the amidase family. GatA subfamily. Heterotrimer of A, B and C subunits.

The enzyme catalyses L-glutamyl-tRNA(Gln) + L-glutamine + ATP + H2O = L-glutaminyl-tRNA(Gln) + L-glutamate + ADP + phosphate + H(+). Its function is as follows. Allows the formation of correctly charged Gln-tRNA(Gln) through the transamidation of misacylated Glu-tRNA(Gln) in organisms which lack glutaminyl-tRNA synthetase. The reaction takes place in the presence of glutamine and ATP through an activated gamma-phospho-Glu-tRNA(Gln). This chain is Glutamyl-tRNA(Gln) amidotransferase subunit A, found in Listeria innocua serovar 6a (strain ATCC BAA-680 / CLIP 11262).